The sequence spans 256 residues: 5'-nucleotidase SurE (256 aa).

A divalent metal cation contacts are provided by aspartate 8, aspartate 9, serine 40, and asparagine 92.

Belongs to the SurE nucleotidase family. A divalent metal cation serves as cofactor.

It localises to the cytoplasm. It catalyses the reaction a ribonucleoside 5'-phosphate + H2O = a ribonucleoside + phosphate. Its function is as follows. Nucleotidase that shows phosphatase activity on nucleoside 5'-monophosphates. This Sinorhizobium medicae (strain WSM419) (Ensifer medicae) protein is 5'-nucleotidase SurE.